The chain runs to 436 residues: Trigger factor (436 aa).

A PPIase FKBP-type domain is found at 164–249 (GDTVVIDYKG…IHEIKEKQLP (86 aa)).

Belongs to the FKBP-type PPIase family. Tig subfamily.

Its subcellular location is the cytoplasm. The enzyme catalyses [protein]-peptidylproline (omega=180) = [protein]-peptidylproline (omega=0). Its function is as follows. Involved in protein export. Acts as a chaperone by maintaining the newly synthesized protein in an open conformation. Functions as a peptidyl-prolyl cis-trans isomerase. The protein is Trigger factor of Limosilactobacillus reuteri (strain DSM 20016) (Lactobacillus reuteri).